Consider the following 748-residue polypeptide: Catalase-peroxidase (748 aa).

Residues 92–238 (WHSAGTYRTG…LAAVQMGLIY (147 aa)) constitute a cross-link (tryptophyl-tyrosyl-methioninium (Trp-Tyr) (with M-264)). Histidine 93 serves as the catalytic Proton acceptor. A cross-link (tryptophyl-tyrosyl-methioninium (Tyr-Met) (with W-92)) is located at residues 238–264 (YVNPEGPDGNPDPLLAAKDIRDTFGRM). Histidine 279 serves as a coordination point for heme b.

This sequence belongs to the peroxidase family. Peroxidase/catalase subfamily. As to quaternary structure, homodimer or homotetramer. Heme b serves as cofactor. In terms of processing, formation of the three residue Trp-Tyr-Met cross-link is important for the catalase, but not the peroxidase activity of the enzyme.

The enzyme catalyses H2O2 + AH2 = A + 2 H2O. It carries out the reaction 2 H2O2 = O2 + 2 H2O. Functionally, bifunctional enzyme with both catalase and broad-spectrum peroxidase activity. The polypeptide is Catalase-peroxidase (Xanthomonas campestris pv. campestris (strain 8004)).